The primary structure comprises 235 residues: Sugar fermentation stimulation protein homolog (235 aa).

Belongs to the SfsA family.

The sequence is that of Sugar fermentation stimulation protein homolog from Pseudomonas paraeruginosa (strain DSM 24068 / PA7) (Pseudomonas aeruginosa (strain PA7)).